We begin with the raw amino-acid sequence, 397 residues long: MEIVGCRAEDNSCPFRPPAMLFHGISGGHIQGIMEEMERRSKTEARLAKGAQLNGRDAGMPPLSPEKPALCAGCGGKISDRYYLLAVDKQWHLRCLKCCECKLALESELTCFAKDGSIYCKEDYYRRFSVQRCARCHLGISASEMVMRARDSVYHLSCFTCSTCNKTLTTGDHFGMKDSLVYCRAHFETLLQGEYPPQLSYTELAAKSGGLALPYFNGTGTVQKGRPRKRKSPALGVDIVNYNSGCNENEADHLDRDQQPYPPSQKTKRMRTSFKHHQLRTMKSYFAINHNPDAKDLKQLAQKTGLTKRVLQVWFQNARAKFRRNLLRQENGGVDKADGTSLPAPPSADSGALTPPGTATTLTDLTNPTITVVTSVTSNMDSHESGSPSQTTLTNLF.

2 consecutive LIM zinc-binding domains span residues 69-130 and 131-193; these read ALCA…RFSV and QRCA…LLQG. Disordered stretches follow at residues 248–272, 330–364, and 378–397; these read ENEA…RMRT, ENGG…TLTD, and SNMD…TNLF. The homeobox DNA-binding region spans 267–326; it reads TKRMRTSFKHHQLRTMKSYFAINHNPDAKDLKQLAQKTGLTKRVLQVWFQNARAKFRRNL. The segment covering 353 to 364 has biased composition (low complexity); sequence LTPPGTATTLTD.

As to quaternary structure, interacts with LDB1 and LDB2.

It is found in the nucleus. Functionally, involved in gonadal development. This chain is LIM/homeobox protein Lhx9 (LHX9), found in Homo sapiens (Human).